An 842-amino-acid polypeptide reads, in one-letter code: Alanine--tRNA ligase (842 aa).

His-549, His-553, Cys-650, and His-654 together coordinate Zn(2+).

The protein belongs to the class-II aminoacyl-tRNA synthetase family. The cofactor is Zn(2+).

It is found in the cytoplasm. The catalysed reaction is tRNA(Ala) + L-alanine + ATP = L-alanyl-tRNA(Ala) + AMP + diphosphate. In terms of biological role, catalyzes the attachment of alanine to tRNA(Ala) in a two-step reaction: alanine is first activated by ATP to form Ala-AMP and then transferred to the acceptor end of tRNA(Ala). Also edits incorrectly charged Ser-tRNA(Ala) and Gly-tRNA(Ala) via its editing domain. This chain is Alanine--tRNA ligase, found in Campylobacter jejuni subsp. jejuni serotype O:23/36 (strain 81-176).